Consider the following 244-residue polypeptide: Large ribosomal subunit protein bL25 (244 aa).

The tract at residues 197–244 (ADVEAEAAEAALAKEAATEAAEEEETEKPASEAEASGEAEQADTDKKE) is disordered. Low complexity predominate over residues 204–215 (AEAALAKEAATE).

The protein belongs to the bacterial ribosomal protein bL25 family. CTC subfamily. In terms of assembly, part of the 50S ribosomal subunit; part of the 5S rRNA/L5/L18/L25 subcomplex. Contacts the 5S rRNA. Binds to the 5S rRNA independently of L5 and L18.

This is one of the proteins that binds to the 5S RNA in the ribosome where it forms part of the central protuberance. The polypeptide is Large ribosomal subunit protein bL25 (Coxiella burnetii (strain CbuK_Q154) (Coxiella burnetii (strain Q154))).